The sequence spans 305 residues: Glycine--tRNA ligase alpha subunit (305 aa).

Belongs to the class-II aminoacyl-tRNA synthetase family. Tetramer of two alpha and two beta subunits.

It localises to the cytoplasm. The enzyme catalyses tRNA(Gly) + glycine + ATP = glycyl-tRNA(Gly) + AMP + diphosphate. This chain is Glycine--tRNA ligase alpha subunit, found in Streptococcus pneumoniae serotype 19F (strain G54).